Here is a 283-residue protein sequence, read N- to C-terminus: RNase adapter protein RapZ (283 aa).

An ATP-binding site is contributed by 8-15; that stretch reads GRSGSGKS. 56–59 contributes to the GTP binding site; sequence DVRN. The RNA-binding stretch occupies residues 266 to 283; it reads RSRGKNVQSRHRTLEKRK.

Belongs to the RapZ-like family. RapZ subfamily. Homotrimer.

Modulates the synthesis of GlmS, by affecting the processing and stability of the regulatory small RNA GlmZ. When glucosamine-6-phosphate (GlcN6P) concentrations are high in the cell, RapZ binds GlmZ and targets it to cleavage by RNase E. Consequently, GlmZ is inactivated and unable to activate GlmS synthesis. Under low GlcN6P concentrations, RapZ is sequestered and inactivated by an other regulatory small RNA, GlmY, preventing GlmZ degradation and leading to synthesis of GlmS. In Photorhabdus laumondii subsp. laumondii (strain DSM 15139 / CIP 105565 / TT01) (Photorhabdus luminescens subsp. laumondii), this protein is RNase adapter protein RapZ.